The primary structure comprises 462 residues: ATP synthase subunit beta (462 aa).

151 to 158 (GGAGVGKT) serves as a coordination point for ATP.

It belongs to the ATPase alpha/beta chains family. As to quaternary structure, F-type ATPases have 2 components, CF(1) - the catalytic core - and CF(0) - the membrane proton channel. CF(1) has five subunits: alpha(3), beta(3), gamma(1), delta(1), epsilon(1). CF(0) has four main subunits: a(1), b(1), b'(1) and c(9-12).

It localises to the cell inner membrane. It catalyses the reaction ATP + H2O + 4 H(+)(in) = ADP + phosphate + 5 H(+)(out). Produces ATP from ADP in the presence of a proton gradient across the membrane. The catalytic sites are hosted primarily by the beta subunits. The polypeptide is ATP synthase subunit beta (Chlorobium phaeobacteroides (strain BS1)).